The chain runs to 747 residues: Polyribonucleotide nucleotidyltransferase (747 aa).

The Mg(2+) site is built by D487 and D493. In terms of domain architecture, KH spans 554-613 (PSTTTIKIDKDKIRDVIGPGGKVIKEICETSDAKIDISDDGTVSVYASDRDKLKVALDKI). In terms of domain architecture, S1 motif spans 623 to 691 (GEIFNGTVMK…NKGKAKLTIK (69 aa)). A disordered region spans residues 691–747 (KNADKDKSSNNPKQKNNVNNSKENSEPERRDSSKKRAWNEDNNSDTTEVITERKYFN). A compositionally biased stretch (low complexity) spans 699 to 712 (SNNPKQKNNVNNSK). The segment covering 730 to 739 (EDNNSDTTEV) has biased composition (polar residues).

Belongs to the polyribonucleotide nucleotidyltransferase family. Mg(2+) is required as a cofactor.

It localises to the cytoplasm. It carries out the reaction RNA(n+1) + phosphate = RNA(n) + a ribonucleoside 5'-diphosphate. Its function is as follows. Involved in mRNA degradation. Catalyzes the phosphorolysis of single-stranded polyribonucleotides processively in the 3'- to 5'-direction. This Rickettsia akari (strain Hartford) protein is Polyribonucleotide nucleotidyltransferase.